Consider the following 511-residue polypeptide: Histidine ammonia-lyase (511 aa).

Positions 142 to 144 form a cross-link, 5-imidazolinone (Ala-Gly); it reads ASG. S143 carries the 2,3-didehydroalanine (Ser) modification.

It belongs to the PAL/histidase family. In terms of processing, contains an active site 4-methylidene-imidazol-5-one (MIO), which is formed autocatalytically by cyclization and dehydration of residues Ala-Ser-Gly.

Its subcellular location is the cytoplasm. The enzyme catalyses L-histidine = trans-urocanate + NH4(+). Its pathway is amino-acid degradation; L-histidine degradation into L-glutamate; N-formimidoyl-L-glutamate from L-histidine: step 1/3. In Brucella canis (strain ATCC 23365 / NCTC 10854 / RM-666), this protein is Histidine ammonia-lyase.